Consider the following 382-residue polypeptide: D-galactonate dehydratase (382 aa).

Asp183 is a binding site for Mg(2+). His185 serves as the catalytic Proton donor. Positions 209 and 235 each coordinate Mg(2+). His285 (proton acceptor) is an active-site residue.

The protein belongs to the mandelate racemase/muconate lactonizing enzyme family. GalD subfamily. Mg(2+) serves as cofactor.

The catalysed reaction is D-galactonate = 2-dehydro-3-deoxy-D-galactonate + H2O. It functions in the pathway carbohydrate acid metabolism; D-galactonate degradation; D-glyceraldehyde 3-phosphate and pyruvate from D-galactonate: step 1/3. Functionally, catalyzes the dehydration of D-galactonate to 2-keto-3-deoxy-D-galactonate. This chain is D-galactonate dehydratase, found in Escherichia fergusonii (strain ATCC 35469 / DSM 13698 / CCUG 18766 / IAM 14443 / JCM 21226 / LMG 7866 / NBRC 102419 / NCTC 12128 / CDC 0568-73).